Consider the following 123-residue polypeptide: Small ribosomal subunit protein uS12 (123 aa).

Positions 1-27 (MPTIQQLIRKPRQPKIKRSKSMHLQEC) are disordered. The span at 9 to 21 (RKPRQPKIKRSKS) shows a compositional bias: basic residues. Aspartate 89 is modified (3-methylthioaspartic acid).

The protein belongs to the universal ribosomal protein uS12 family. As to quaternary structure, part of the 30S ribosomal subunit. Contacts proteins S8 and S17. May interact with IF1 in the 30S initiation complex.

Its function is as follows. With S4 and S5 plays an important role in translational accuracy. Interacts with and stabilizes bases of the 16S rRNA that are involved in tRNA selection in the A site and with the mRNA backbone. Located at the interface of the 30S and 50S subunits, it traverses the body of the 30S subunit contacting proteins on the other side and probably holding the rRNA structure together. The combined cluster of proteins S8, S12 and S17 appears to hold together the shoulder and platform of the 30S subunit. This is Small ribosomal subunit protein uS12 from Roseobacter denitrificans (strain ATCC 33942 / OCh 114) (Erythrobacter sp. (strain OCh 114)).